Reading from the N-terminus, the 542-residue chain is Beta-amylase 2, chloroplastic (542 aa).

Residues 1 to 55 (MAIRLNHSVIPVSVKLGAPTRVSARSSLPFSVGDWRGVSTFSGARPLVLAKVKLR) constitute a chloroplast transit peptide. Residues Asp136, His176, and Asp184 each coordinate substrate. Glu269 (proton donor) is an active-site residue. Residues Lys377, His382, and Thr424 each coordinate substrate. Glu465 acts as the Proton acceptor in catalysis. Substrate-binding positions include 466 to 467 (NA) and Arg501.

It belongs to the glycosyl hydrolase 14 family.

It is found in the plastid. The protein localises to the chloroplast. The catalysed reaction is Hydrolysis of (1-&gt;4)-alpha-D-glucosidic linkages in polysaccharides so as to remove successive maltose units from the non-reducing ends of the chains.. Its activity is regulated as follows. Redox regulation; active in reducing conditions, inactive in oxidizing conditions. Functionally, low beta-amylase activity. Interacts poorly with starch or other alpha-1,4-glucan. This is Beta-amylase 2, chloroplastic (BAM2) from Arabidopsis thaliana (Mouse-ear cress).